We begin with the raw amino-acid sequence, 415 residues long: Chorismate synthase (415 aa).

The interval 43 to 72 (EDLDRRKPGQSMITTSRGEPDKVSIKSGLQ) is disordered. Arg48 is a binding site for NADP(+). FMN contacts are provided by residues 125 to 127 (RSS), Gly304, 319 to 323 (HAPVS), and Arg346. Positions 262–310 (TDYTEDWEFGESEATASENASGDEPRARGDPKPVGNDHGGIQGGITTGD) are disordered. Residues 298–307 (DHGGIQGGIT) show a composition bias toward gly residues. The span at 379 to 393 (PDRLDDRPGEYDTDY) shows a compositional bias: basic and acidic residues. Positions 379–415 (PDRLDDRPGEYDTDYHPSSPRNDPEDADTHATTVDED) are disordered.

It belongs to the chorismate synthase family. The cofactor is FMNH2.

It carries out the reaction 5-O-(1-carboxyvinyl)-3-phosphoshikimate = chorismate + phosphate. It functions in the pathway metabolic intermediate biosynthesis; chorismate biosynthesis; chorismate from D-erythrose 4-phosphate and phosphoenolpyruvate: step 7/7. Its function is as follows. Catalyzes the anti-1,4-elimination of the C-3 phosphate and the C-6 proR hydrogen from 5-enolpyruvylshikimate-3-phosphate (EPSP) to yield chorismate, which is the branch point compound that serves as the starting substrate for the three terminal pathways of aromatic amino acid biosynthesis. This reaction introduces a second double bond into the aromatic ring system. This Halomicrobium mukohataei (strain ATCC 700874 / DSM 12286 / JCM 9738 / NCIMB 13541) (Haloarcula mukohataei) protein is Chorismate synthase.